The chain runs to 381 residues: Na(+)/H(+) antiporter NhaA 1 (381 aa).

11 helical membrane-spanning segments follow: residues 18–38 (GLLLLFVTVISLWAANSSYSA), 53–73 (ITHWINDGLMTIFFLLIGLEL), 89–109 (SLPIMAAFGGMLIPAATFLAL), 118–138 (GAGIPMATDIAFAIGILSLLG), 147–167 (VFLTALAVIDDLGAIIVIAVF), 170–190 (TSIGFVNLAIALGIWVFLFVL), 210–230 (YFMLNSGIHATITGVILAFVI), 251–271 (PVAFFILPLFAIANTCIAIES), 283–303 (FGIILGLVIGKPLGILLFSSI), 321–341 (ILGAGMLGGIGFTMSIFITLL), and 348–368 (IIVFSKIAIIIASIISGITGF).

It belongs to the NhaA Na(+)/H(+) (TC 2.A.33) antiporter family.

The protein resides in the cell inner membrane. It catalyses the reaction Na(+)(in) + 2 H(+)(out) = Na(+)(out) + 2 H(+)(in). In terms of biological role, na(+)/H(+) antiporter that extrudes sodium in exchange for external protons. In Flavobacterium johnsoniae (strain ATCC 17061 / DSM 2064 / JCM 8514 / BCRC 14874 / CCUG 350202 / NBRC 14942 / NCIMB 11054 / UW101) (Cytophaga johnsonae), this protein is Na(+)/H(+) antiporter NhaA 1.